The chain runs to 118 residues: Large ribosomal subunit protein bL20 (118 aa).

It belongs to the bacterial ribosomal protein bL20 family.

Binds directly to 23S ribosomal RNA and is necessary for the in vitro assembly process of the 50S ribosomal subunit. It is not involved in the protein synthesizing functions of that subunit. In Desulfovibrio desulfuricans (strain ATCC 27774 / DSM 6949 / MB), this protein is Large ribosomal subunit protein bL20.